Consider the following 160-residue polypeptide: Phosphopantetheine adenylyltransferase (160 aa).

T10 serves as a coordination point for substrate. Residues 10–11 and H18 contribute to the ATP site; that span reads TF. K42, L74, and R88 together coordinate substrate. Residues 89-91, E99, and 124-130 each bind ATP; these read GLR and HGFLSST.

It belongs to the bacterial CoaD family. As to quaternary structure, homohexamer. It depends on Mg(2+) as a cofactor.

Its subcellular location is the cytoplasm. The enzyme catalyses (R)-4'-phosphopantetheine + ATP + H(+) = 3'-dephospho-CoA + diphosphate. The protein operates within cofactor biosynthesis; coenzyme A biosynthesis; CoA from (R)-pantothenate: step 4/5. Its function is as follows. Reversibly transfers an adenylyl group from ATP to 4'-phosphopantetheine, yielding dephospho-CoA (dPCoA) and pyrophosphate. The polypeptide is Phosphopantetheine adenylyltransferase (Aliivibrio fischeri (strain MJ11) (Vibrio fischeri)).